We begin with the raw amino-acid sequence, 303 residues long: Putative band 7 family protein R614 (303 aa).

It belongs to the band 7/mec-2 family.

This chain is Putative band 7 family protein R614, found in Acanthamoeba polyphaga (Amoeba).